The sequence spans 62 residues: Photosystem II reaction center protein Z (62 aa).

A run of 2 helical transmembrane segments spans residues 8–28 (AVFALIATSSILLISVPVVFA) and 41–61 (FSGTSLWLGLVFLVGILNSLI).

This sequence belongs to the PsbZ family. In terms of assembly, PSII is composed of 1 copy each of membrane proteins PsbA, PsbB, PsbC, PsbD, PsbE, PsbF, PsbH, PsbI, PsbJ, PsbK, PsbL, PsbM, PsbT, PsbY, PsbZ, Psb30/Ycf12, at least 3 peripheral proteins of the oxygen-evolving complex and a large number of cofactors. It forms dimeric complexes.

The protein resides in the plastid. It is found in the chloroplast thylakoid membrane. Its function is as follows. May control the interaction of photosystem II (PSII) cores with the light-harvesting antenna, regulates electron flow through the 2 photosystem reaction centers. PSII is a light-driven water plastoquinone oxidoreductase, using light energy to abstract electrons from H(2)O, generating a proton gradient subsequently used for ATP formation. The protein is Photosystem II reaction center protein Z of Spinacia oleracea (Spinach).